We begin with the raw amino-acid sequence, 329 residues long: GTP 3',8-cyclase (329 aa).

Positions A8 to A234 constitute a Radical SAM core domain. R17 provides a ligand contact to GTP. Residues C24 and C28 each coordinate [4Fe-4S] cluster. Y30 contacts S-adenosyl-L-methionine. C31 lines the [4Fe-4S] cluster pocket. R68 is a binding site for GTP. S-adenosyl-L-methionine is bound at residue G72. T99 is a binding site for GTP. S-adenosyl-L-methionine is bound at residue S123. Position 160 (K160) interacts with GTP. M194 serves as a coordination point for S-adenosyl-L-methionine. 2 residues coordinate [4Fe-4S] cluster: C257 and C260. R262–R264 provides a ligand contact to GTP. [4Fe-4S] cluster is bound at residue C274.

This sequence belongs to the radical SAM superfamily. MoaA family. As to quaternary structure, monomer and homodimer. It depends on [4Fe-4S] cluster as a cofactor.

The enzyme catalyses GTP + AH2 + S-adenosyl-L-methionine = (8S)-3',8-cyclo-7,8-dihydroguanosine 5'-triphosphate + 5'-deoxyadenosine + L-methionine + A + H(+). It functions in the pathway cofactor biosynthesis; molybdopterin biosynthesis. Catalyzes the cyclization of GTP to (8S)-3',8-cyclo-7,8-dihydroguanosine 5'-triphosphate. The polypeptide is GTP 3',8-cyclase (Escherichia coli O45:K1 (strain S88 / ExPEC)).